A 790-amino-acid chain; its full sequence is E3 ubiquitin-protein ligase Jade-2 (790 aa).

Disordered stretches follow at residues 1–52 (MEEK…PSEV) and 111–130 (GPPAQASPSSTMLGEGSQPD). A phosphoserine mark is found at Ser9 and Ser15. Residues 9–28 (SISSDNSDTTDSHATSTSAS) are compositionally biased toward low complexity. N6-acetyllysine is present on residues Lys32 and Lys38. Residue Ser117 is modified to Phosphoserine. Residues 199–249 (DVVCDVCRSPEGEDGNEMVFCDKCNVCVHQACYGILKVPTGSWLCRTCALG) form a PHD-type 1 zinc finger. Residues 251 to 285 (QPKCLLCPKRGGALKPTRSGTKWVHVSCALWIPEV) form a C2HC pre-PHD-type zinc finger. Lys298 bears the N6-acetyllysine mark. The PHD-type 2 zinc finger occupies 309–365 (LSCSLCKECTGTCIQCSMPSCVTAFHVTCAFDHGLEMRTILADNDEVKFKSFCQEHS). Disordered regions lie at residues 361-386 (CQEHSDGGPRNEPTSEPTEPSQAGED) and 578-777 (SFMR…PREA). The span at 372–381 (EPTSEPTEPS) shows a compositional bias: polar residues. Residues 593–606 (KARGRTRLPAKKKP) show a composition bias toward basic residues. The segment covering 684–693 (AASVAADSDV) has biased composition (low complexity). Residues 737 to 747 (ERPKVSLHFDT) show a composition bias toward basic and acidic residues. Residues 757–767 (EMSDSDVEAED) show a composition bias toward acidic residues.

It belongs to the JADE family. In terms of assembly, component of the HBO1 complex composed at least of ING4 or ING5, MYST2/HBO1, MEAF6, and one of JADE1, JADE2 and JADE3. Interacts (via C-terminus) with KDM1A (via AOD/Tower domain).

It carries out the reaction S-ubiquitinyl-[E2 ubiquitin-conjugating enzyme]-L-cysteine + [acceptor protein]-L-lysine = [E2 ubiquitin-conjugating enzyme]-L-cysteine + N(6)-ubiquitinyl-[acceptor protein]-L-lysine.. It participates in protein modification; protein ubiquitination. In terms of biological role, scaffold subunit of some HBO1 complexes, which have a histone H4 acetyltransferase activity. Acts as an E3 ubiquitin-protein ligase mediating the ubiquitination and subsequent proteasomal degradation of target protein histone demethylase KDM1A. Also acts as a ubiquitin ligase E3 toward itself. Positive regulator of neurogenesis. This is E3 ubiquitin-protein ligase Jade-2 (JADE2) from Homo sapiens (Human).